The primary structure comprises 475 residues: Bifunctional protein HldE (475 aa).

Residues 1 to 320 (MNSSYLNFKD…AIMFQRSHNT (320 aa)) form a ribokinase region. ATP is bound at residue 196–199 (NLLE). D265 is a catalytic residue. Positions 346–475 (FTNGCFDILH…TTSIIEKANL (130 aa)) are cytidylyltransferase.

The protein in the N-terminal section; belongs to the carbohydrate kinase PfkB family. It in the C-terminal section; belongs to the cytidylyltransferase family. In terms of assembly, homodimer.

The catalysed reaction is D-glycero-beta-D-manno-heptose 7-phosphate + ATP = D-glycero-beta-D-manno-heptose 1,7-bisphosphate + ADP + H(+). It carries out the reaction D-glycero-beta-D-manno-heptose 1-phosphate + ATP + H(+) = ADP-D-glycero-beta-D-manno-heptose + diphosphate. It functions in the pathway nucleotide-sugar biosynthesis; ADP-L-glycero-beta-D-manno-heptose biosynthesis; ADP-L-glycero-beta-D-manno-heptose from D-glycero-beta-D-manno-heptose 7-phosphate: step 1/4. Its pathway is nucleotide-sugar biosynthesis; ADP-L-glycero-beta-D-manno-heptose biosynthesis; ADP-L-glycero-beta-D-manno-heptose from D-glycero-beta-D-manno-heptose 7-phosphate: step 3/4. Catalyzes the phosphorylation of D-glycero-D-manno-heptose 7-phosphate at the C-1 position to selectively form D-glycero-beta-D-manno-heptose-1,7-bisphosphate. Functionally, catalyzes the ADP transfer from ATP to D-glycero-beta-D-manno-heptose 1-phosphate, yielding ADP-D-glycero-beta-D-manno-heptose. The chain is Bifunctional protein HldE from Marinomonas sp. (strain MWYL1).